Here is a 269-residue protein sequence, read N- to C-terminus: 4-hydroxy-tetrahydrodipicolinate reductase (269 aa).

Residues 8 to 13 and Glu-34 contribute to the NAD(+) site; that span reads GAAGRM. Arg-35 is a binding site for NADP(+). NAD(+)-binding positions include 98 to 100 and 122 to 125; these read GTT and APNY. The active-site Proton donor/acceptor is the His-155. His-156 contributes to the (S)-2,3,4,5-tetrahydrodipicolinate binding site. Residue Lys-159 is the Proton donor of the active site. A (S)-2,3,4,5-tetrahydrodipicolinate-binding site is contributed by 165–166; the sequence is GT.

Belongs to the DapB family.

The protein localises to the cytoplasm. It catalyses the reaction (S)-2,3,4,5-tetrahydrodipicolinate + NAD(+) + H2O = (2S,4S)-4-hydroxy-2,3,4,5-tetrahydrodipicolinate + NADH + H(+). The catalysed reaction is (S)-2,3,4,5-tetrahydrodipicolinate + NADP(+) + H2O = (2S,4S)-4-hydroxy-2,3,4,5-tetrahydrodipicolinate + NADPH + H(+). It participates in amino-acid biosynthesis; L-lysine biosynthesis via DAP pathway; (S)-tetrahydrodipicolinate from L-aspartate: step 4/4. Its function is as follows. Catalyzes the conversion of 4-hydroxy-tetrahydrodipicolinate (HTPA) to tetrahydrodipicolinate. The polypeptide is 4-hydroxy-tetrahydrodipicolinate reductase (Vibrio cholerae serotype O1 (strain ATCC 39315 / El Tor Inaba N16961)).